Consider the following 750-residue polypeptide: uncharacterized protein (750 aa).

3 consecutive transmembrane segments (helical) span residues 1–21 (MSIISSWLLVSIICLTTSIVT), 465–485 (YGANETGIATFIPGSSIISYL), and 586–606 (GMFGAAIYSWNFEGMSFVAVS).

The protein localises to the membrane. This is an uncharacterized protein from Saccharomyces cerevisiae (strain ATCC 204508 / S288c) (Baker's yeast).